Here is a 712-residue protein sequence, read N- to C-terminus: Eukaryotic translation initiation factor 3 subunit B (712 aa).

Positions 1 to 98 (MSLTEAEYHE…LFVQFETSEM (98 aa)) are sufficient for interaction with HCR1 and TIF32. The sufficient for interaction with PIC8 stretch occupies residues 1–224 (MSLTEAEYHE…GVQSWGGADF (224 aa)). In terms of domain architecture, RRM spans 37–124 (NYVVVDGAPI…HRLLVNRLSD (88 aa)). WD repeat units follow at residues 191 to 229 (RKFFTSKYAKFSPKGTYLFSIHPQGVQSWGGADFSSIDK), 230 to 293 (FMHN…RTFA), 301 to 339 (QKEMPWPLVKWSHDDKYCARQGPGALAVYETPSFQLLDK), 342 to 384 (IKID…QTAR), 452 to 493 (ELKE…DFYA), 513 to 555 (ITDK…SNKN), and 566 to 604 (DKFSGMTNISWDPSGRFVATWSSSWLHTIENGYKLYEFT).

This sequence belongs to the eIF-3 subunit B family. Component of the eukaryotic translation initiation factor 3 (eIF-3) complex.

It localises to the cytoplasm. In terms of biological role, RNA-binding component of the eukaryotic translation initiation factor 3 (eIF-3) complex, which is involved in protein synthesis of a specialized repertoire of mRNAs and, together with other initiation factors, stimulates binding of mRNA and methionyl-tRNAi to the 40S ribosome. The eIF-3 complex specifically targets and initiates translation of a subset of mRNAs involved in cell proliferation. This chain is Eukaryotic translation initiation factor 3 subunit B, found in Scheffersomyces stipitis (strain ATCC 58785 / CBS 6054 / NBRC 10063 / NRRL Y-11545) (Yeast).